A 194-amino-acid polypeptide reads, in one-letter code: MKIGIVTGIPGVGKSTVLAKVKEILDNQGINNKIINYGDFMLATALKLGYAKDRDEMRKLSVEKQKKLQIDAAKGIAEEARAGGEGYLFIDTHAVIRTPSGYLPGLPSYVITEINPSVIFLLEADPKIILSRQKRDTTRNRNDYSDESVILETINFARYAATASAVLAGSTVKVIVNVEGDPSIAANEIIRSMK.

8 to 16 (GIPGVGKST) contributes to the ATP binding site.

It belongs to the archaeal adenylate kinase family. Homotrimer.

It localises to the cytoplasm. It carries out the reaction AMP + ATP = 2 ADP. The protein is Adenylate kinase (adkA) of Sulfolobus acidocaldarius (strain ATCC 33909 / DSM 639 / JCM 8929 / NBRC 15157 / NCIMB 11770).